The sequence spans 493 residues: Glutamate synthase [NADPH] small chain (493 aa).

Residue 299 to 313 (GGGDTGADCVATALR) coordinates NADP(+).

This sequence belongs to the glutamate synthase family. In terms of assembly, aggregate of 4 catalytic active heterodimers, consisting of a large and a small subunit.

It catalyses the reaction 2 L-glutamate + NADP(+) = L-glutamine + 2-oxoglutarate + NADPH + H(+). It participates in amino-acid biosynthesis; L-glutamate biosynthesis via GLT pathway; L-glutamate from 2-oxoglutarate and L-glutamine (NADP(+) route): step 1/1. The protein operates within energy metabolism; nitrogen metabolism. This is Glutamate synthase [NADPH] small chain (gltB) from Bacillus subtilis (strain 168).